The primary structure comprises 537 residues: MRPGFVGLGFGQWPVYVVRWPKLHLTPRQRKRVLHRRRLLTDRPISLSQIPIRTGGPMNDPWPRPTQGPAKTIETDYLVIGAGAMGMAFTDTLITESGARVVMIDRACQPGGHWTTAYPFVRLHQPSAYYGVNSRALGNNTIDLVGWNQGLNELAPVGEICAYFDAVLQQQLLPTGRVDYFPMSEYLGDGRFRTLAGTEYVVTVNRRIVDATYLRAVVPSMRPAPYSVAPGVDCVAPNELPKLGTRDRYVVVGAGKTGMDVCLWLLRNDVCPDKLTWIMPRDSWLIDRATLQPGPTFVRQFRESYGATLEAIGAATSTDDLFDRLETAGTLLRIDPSVRPSMYRCATVSHLELEQLRRIRDIVRMGHVQRIEPTTIVLDGGSVPATPTALYIDCTADGAPQRPAKPVFDADHLTLQAVRGCQQVFSAAFIAHVEFAYEDDAVKNELCTPIPHPDCDLDWMRLMHSDLGNFQRWLNDPDLTDWLSSARLNLLADLLPPLSHKPRVRERVVSMFQKRLGTAGDQLAKLLDAATATTEQR.

This is an uncharacterized protein from Mycobacterium bovis (strain ATCC BAA-935 / AF2122/97).